A 255-amino-acid polypeptide reads, in one-letter code: Small ribosomal subunit protein eS1 (255 aa).

An N-acetylalanine; partial modification is found at Ala2.

This sequence belongs to the eukaryotic ribosomal protein eS1 family. As to quaternary structure, component of the small ribosomal subunit. Mature ribosomes consist of a small (40S) and a large (60S) subunit. The 40S subunit contains about 33 different proteins and 1 molecule of RNA (18S). The 60S subunit contains about 49 different proteins and 3 molecules of RNA (25S, 5.8S and 5S).

It localises to the cytoplasm. The protein is Small ribosomal subunit protein eS1 of Kluyveromyces lactis (strain ATCC 8585 / CBS 2359 / DSM 70799 / NBRC 1267 / NRRL Y-1140 / WM37) (Yeast).